A 222-amino-acid chain; its full sequence is Small ribosomal subunit protein uS7m (222 aa).

Belongs to the universal ribosomal protein uS7 family. In terms of assembly, part of the small ribosomal subunit.

The protein resides in the mitochondrion. In terms of biological role, one of the primary rRNA binding proteins, it binds directly to 18S rRNA where it nucleates assembly of the head domain of the small subunit. The polypeptide is Small ribosomal subunit protein uS7m (RPS7) (Prototheca wickerhamii).